A 1553-amino-acid chain; its full sequence is Sodium channel protein PaFPC1 (1553 aa).

The disordered stretch occupies residues 1-68 (MADNSPLIRE…SAHPDQALEQ (68 aa)). Topologically, residues 1 to 140 (MADNSPLIRE…RVAISTMVQP (140 aa)) are cytoplasmic. Positions 34 to 60 (ENGKTEENKDNSRDKGRGANKDRDGSA) are enriched in basic and acidic residues. The helical transmembrane segment at 141–159 (IFSYFIMITILIHCIFMIM) threads the bilayer. Residues 160-165 (PATQTT) are Extracellular-facing. Residues 166-186 (YILELVFLSIYTIEVVVKVLA) form a helical membrane-spanning segment. The Cytoplasmic portion of the chain corresponds to 187–200 (RGFILHPFAYLRDP). Residues 201-218 (WNWLDFLVTLIGYITLVV) form a helical membrane-spanning segment. Residues 219 to 224 (DLGHLY) lie on the Extracellular side of the membrane. A helical transmembrane segment spans residues 225 to 241 (ALRAFRVLRSWRTVTIV). Residues 242–260 (PGWRTIVDALSLSITSLKD) are Cytoplasmic-facing. Residues 261–280 (LVLLLLFSLFVFAVLGLQIY) form a helical membrane-spanning segment. The Extracellular portion of the chain corresponds to 281–360 (MGVLTQKCVK…PNYGYTSFDT (80 aa)). 2 disulfide bridges follow: cysteine 288/cysteine 337 and cysteine 328/cysteine 343. N-linked (GlcNAc...) asparagine glycosylation is found at asparagine 300, asparagine 308, asparagine 312, and asparagine 330. An intramembrane region (pore-forming) is located at residues 361–385 (FGWAFLSVFRLVTLDYWEDLYQLAL). Glutamate 378 provides a ligand contact to saxitoxin. Over 386–392 (RSAGPWH) the chain is Extracellular. The helical transmembrane segment at 393–413 (ILFFIIVVFYGTFCFLNFILA) threads the bilayer. Topologically, residues 414 to 519 (VVVMSYTHMV…GAIGAVVLSP (106 aa)) are cytoplasmic. A helical membrane pass occupies residues 520-538 (FFELFIAVIIVLNITFMAL). The Extracellular segment spans residues 539–549 (DHHDMNIEFER). Residues 550 to 569 (ILRTGNYIFTSIYIVEAVLK) form a helical membrane-spanning segment. At 570–583 (IIALSPKFYFKDSW) the chain is on the cytoplasmic side. Residues 584 to 603 (NVFDFIIVVFAILELGLEGV) traverse the membrane as a helical segment. Residues 604–605 (QG) lie on the Extracellular side of the membrane. The helical transmembrane segment at 606–623 (LSVFRSFRLLRVFRLAKF) threads the bilayer. The Cytoplasmic portion of the chain corresponds to 624-639 (WPTLNNFMSVMTKSYG). The chain crosses the membrane as a helical span at residues 640–658 (AFVNVMYVMFLLLFIFAII). Topologically, residues 659–686 (GMQLFGMNYIDNMERFPDGDLPRWNFTD) are extracellular. The N-linked (GlcNAc...) asparagine glycan is linked to asparagine 683. The segment at residues 687–707 (FLHSFMIVFRALCGEWIESMW) is an intramembrane region (pore-forming). Tetrodotoxin-binding residues include glutamate 701 and glutamate 704. Glutamate 704 serves as a coordination point for saxitoxin. At 708–719 (DCMLVGDWSCIP) the chain is on the extracellular side. A disulfide bridge links cysteine 709 with cysteine 717. The helical transmembrane segment at 720 to 740 (FFVAVFFVGNLVILNLLIALL) threads the bilayer. The Cytoplasmic portion of the chain corresponds to 741-857 (LNNYGSFCTS…VCFLLAKNKY (117 aa)). Residues 858–875 (FQKFVTAVLVITSVLLAL) form a helical membrane-spanning segment. The Extracellular segment spans residues 876-888 (EDIYLPQRPVLVN). A helical membrane pass occupies residues 889-907 (ITLYVDYVLTAFFVIEMII). Residues 908–921 (MLFAVGFKKYFTSK) lie on the Cytoplasmic side of the membrane. Residues 922–940 (WYWLDFIVVVAYLLNFVLM) traverse the membrane as a helical segment. Topologically, residues 941 to 945 (CAGIE) are extracellular. A helical membrane pass occupies residues 946–964 (ALQTLRLLRVFRLFRPLSK). Over 965–981 (VNGMQVVTSTLVEAVPH) the chain is Cytoplasmic. A helical transmembrane segment spans residues 982-1001 (IFNVILVGIFFWLVFAIMGV). The Extracellular segment spans residues 1002–1047 (QLFAGKFYKCVDENSTVLSHEITMDRNDCLHENYTWENSPMNFDHV). Residues cysteine 1011 and cysteine 1030 are joined by a disulfide bond. Asparagine 1015 is a glycosylation site (N-linked (GlcNAc...) asparagine). Residue asparagine 1028 is glycosylated (N-linked (GlcNAc...) asparagine; atypical). N-linked (GlcNAc...) asparagine glycosylation occurs at asparagine 1034. The pore-forming intramembrane region spans 1048–1069 (GNAYLSLLQVATFKGWLQIMND). Residue glycine 1062 participates in tetrodotoxin binding. Position 1063 (tryptophan 1063) interacts with saxitoxin. The Extracellular segment spans residues 1070 to 1086 (AIDSREVHKQPIRETNI). The helical transmembrane segment at 1087 to 1108 (YMYLYFIFFIVFGSFFILKLFV) threads the bilayer. Topologically, residues 1109–1171 (CILIDIFRQQ…LMYDISVNRK (63 aa)) are cytoplasmic. Residues 1133-1146 (QLIYRRAVMRTMSA) are linker region that may regulate channel inactivation. The chain crosses the membrane as a helical span at residues 1172-1189 (FEYTMMILIILNVAVMAI). Topologically, residues 1190 to 1200 (DHYGQSMEFSE) are extracellular. Residues 1201 to 1219 (VLDYLNLIFIIIFFVECVI) traverse the membrane as a helical segment. Residues 1220-1231 (KVSGLRHHYFKD) are Cytoplasmic-facing. A helical transmembrane segment spans residues 1232 to 1249 (PWNIIDFLYVVLAIAGLM). Over 1250–1262 (LSDVIEKYFISPT) the chain is Extracellular. A helical transmembrane segment spans residues 1263 to 1279 (LLRILRILRVGRLLRYF). Residues 1280-1298 (QSARGMRLLLLALRKALRT) lie on the Cytoplasmic side of the membrane. The chain crosses the membrane as a helical span at residues 1299–1316 (LFNVSFLLFVIMFVYAVF). Over 1317–1338 (GMEFFMHIRDAGAIDDVYNFKT) the chain is Extracellular. Positions 1339–1361 (FGQSIILLFQLATSAGWDGVYFA) form an intramembrane region, pore-forming. Residues glycine 1354 and aspartate 1356 each contribute to the tetrodotoxin site. Residue aspartate 1356 coordinates saxitoxin. Residues 1362–1387 (IANEEDCRAPDHELGYPGNCGSRALG) are Extracellular-facing. Cysteines 1368 and 1381 form a disulfide. A helical membrane pass occupies residues 1388-1410 (IAYLVSYLIITCLVVINMYAAVI). At 1411 to 1553 (LDYVLEVYED…NAWRKHKQQN (143 aa)) the chain is on the cytoplasmic side.

It belongs to the sodium channel (TC 1.A.1.10) family. Detected in adult nerve cord, muscle, gut and mushroom-shaped accessory glands.

The protein localises to the cell membrane. Inhibited by the pore blockers saxitoxin and tetrodotoxin. Functionally, mediates the voltage-dependent sodium ion permeability of excitable membranes. The chain is Sodium channel protein PaFPC1 from Periplaneta americana (American cockroach).